The chain runs to 180 residues: Fucolectin-3 (180 aa).

The first 22 residues, 1–22 (MEVKMIILLFQILAISTLKSDS), serve as a signal peptide directing secretion. The segment at 31-179 (QENVALRGRA…VEVNVLFPAP (149 aa)) is F5/8 type C-like. Ca(2+)-binding residues include Asn-58, Asp-61, Asn-63, and Ser-72. 3 disulfides stabilise this stretch: Cys-73–Cys-168, Cys-104–Cys-105, and Cys-130–Cys-146. Alpha-L-fucose-binding residues include His-75 and Arg-101. A Cell attachment site motif is present at residues 101–103 (RGD). Arg-108 is a binding site for alpha-L-fucose. 2 residues coordinate Ca(2+): Cys-168 and Glu-169.

Belongs to the fucolectin family. As to quaternary structure, homotrimer. Parenchymal hepatocytes.

It is found in the secreted. It localises to the extracellular space. Its function is as follows. Acts as a defensive agent. Recognizes blood group fucosylated oligosaccharides including A, B, H and Lewis B-type antigens. Does not recognize Lewis A antigen and has low affinity for monovalent haptens. The chain is Fucolectin-3 from Anguilla japonica (Japanese eel).